The following is a 200-amino-acid chain: Lipopolysaccharide core heptose(II)-phosphate phosphatase (200 aa).

An N-terminal signal peptide occupies residues 1–25 (MLAFCRSSLKSKKYFIILLALAAIA).

Belongs to the phosphoglycerate mutase family. Ais subfamily.

Its subcellular location is the periplasm. The protein operates within bacterial outer membrane biogenesis; lipopolysaccharide metabolism. Its function is as follows. Catalyzes the dephosphorylation of heptose(II) of the outer membrane lipopolysaccharide core. This chain is Lipopolysaccharide core heptose(II)-phosphate phosphatase, found in Escherichia coli O157:H7.